The chain runs to 856 residues: Vomeronasal type-2 receptor 116 (856 aa).

The first 18 residues, 1–18 (MFTLIFLFLFLNIPLLVA), serve as a signal peptide directing secretion. The Extracellular segment spans residues 19-586 (DFISPRCFWK…VFLSYEEPLG (568 aa)). N94 carries an N-linked (GlcNAc...) asparagine glycan. A helical membrane pass occupies residues 587–607 (VALSLLSLCFSAFTTVVLGIF). Residues 608–622 (VKHHNTPIVKANNRT) are Cytoplasmic-facing. The chain crosses the membrane as a helical span at residues 623 to 643 (LTYLLLISLIFCFLCPLLFIG). Topologically, residues 644-658 (HPNSATCILQQLTFG) are extracellular. The chain crosses the membrane as a helical span at residues 659–679 (VVFTVSLSTVLAKTITVVLAF). Over 680–690 (KIIASQRMMKY) the chain is Cytoplasmic. The chain crosses the membrane as a helical span at residues 691–711 (FLISGAINYIIPICILIQVIV). At 712 to 745 (CAVWLRASPPSVDIDAHSEHGQIIIVCHKGSVNA) the chain is on the extracellular side. Residues 746 to 766 (FYCVLGYLAILAFGSFTLAFL) traverse the membrane as a helical segment. The Cytoplasmic portion of the chain corresponds to 767 to 778 (SRNLPGAFNEAK). A helical membrane pass occupies residues 779-799 (SITFSMLVFCSVWVTFIPVYH). Residues 800–806 (STKGKVM) lie on the Extracellular side of the membrane. A helical membrane pass occupies residues 807–827 (VAVEIFSTLASSAGMLGCIFV). Residues 828–856 (PKCYTILFRQDQNSLEMIRVKSSSNVHVS) lie on the Cytoplasmic side of the membrane.

The protein belongs to the G-protein coupled receptor 3 family. As to expression, expressed in the vomeronasal organ.

Its subcellular location is the cell membrane. Functionally, receptor for the Esp1 pheromone. Mediates the response to Esp1 which enhances female sexual receptive behavior (lordosis) upon male mounting, resulting in successful copulation. The protein is Vomeronasal type-2 receptor 116 of Mus musculus (Mouse).